The following is a 564-amino-acid chain: Urease subunit alpha (564 aa).

The region spanning 126-564 is the Urease domain; that stretch reads GGIDTHIHFI…LPMAQRYFLF (439 aa). 3 residues coordinate Ni(2+): H131, H133, and K214. K214 bears the N6-carboxylysine mark. H216 contacts substrate. Residues H243 and H269 each coordinate Ni(2+). Catalysis depends on H317, which acts as the Proton donor. D357 is a Ni(2+) binding site.

The protein belongs to the metallo-dependent hydrolases superfamily. Urease alpha subunit family. As to quaternary structure, heterotrimer of UreA (gamma), UreB (beta) and UreC (alpha) subunits. Three heterotrimers associate to form the active enzyme. Ni cation is required as a cofactor. Carboxylation allows a single lysine to coordinate two nickel ions.

The protein localises to the cytoplasm. The catalysed reaction is urea + 2 H2O + H(+) = hydrogencarbonate + 2 NH4(+). Its pathway is nitrogen metabolism; urea degradation; CO(2) and NH(3) from urea (urease route): step 1/1. The polypeptide is Urease subunit alpha (Burkholderia pseudomallei (strain 1710b)).